The following is a 367-amino-acid chain: MNSNISSSPKILIMAGGTGGHVFPALAVAKYLAEKGWQIRWLGTADRMEARLVPQHGFDIEFIDIKGVRGNGLMRKLAAPFKIIRSIIQAKAVIDDFQPDVILGMGGFASGPGGVAGKLSGIPVVLHEQNAIPGLTNKLLSKIAKKVLCAFPNTFASNVANVEVVGNPIRQELIELGAQIKTPQADALRVLVVGGSLGAKVLNDVMPAVVAHLSKYHSLTVWHQVGKNNQATVKASYQQLGQSDSVNVAEFIDDMEAAYRWADVVVCRSGALTVSELAAVGLPSILVPYPHAVDDHQTVNASVLVDAGAGFLLPQTILNADNLAEKLQLFAENRQELAQMGHKARGVAVLDATQRVADICASFARKG.

Residues 18 to 20 (TGG), asparagine 130, arginine 170, serine 196, isoleucine 252, 271 to 276 (ALTVSE), and glutamine 297 contribute to the UDP-N-acetyl-alpha-D-glucosamine site.

Belongs to the glycosyltransferase 28 family. MurG subfamily.

It is found in the cell inner membrane. The catalysed reaction is di-trans,octa-cis-undecaprenyl diphospho-N-acetyl-alpha-D-muramoyl-L-alanyl-D-glutamyl-meso-2,6-diaminopimeloyl-D-alanyl-D-alanine + UDP-N-acetyl-alpha-D-glucosamine = di-trans,octa-cis-undecaprenyl diphospho-[N-acetyl-alpha-D-glucosaminyl-(1-&gt;4)]-N-acetyl-alpha-D-muramoyl-L-alanyl-D-glutamyl-meso-2,6-diaminopimeloyl-D-alanyl-D-alanine + UDP + H(+). It participates in cell wall biogenesis; peptidoglycan biosynthesis. In terms of biological role, cell wall formation. Catalyzes the transfer of a GlcNAc subunit on undecaprenyl-pyrophosphoryl-MurNAc-pentapeptide (lipid intermediate I) to form undecaprenyl-pyrophosphoryl-MurNAc-(pentapeptide)GlcNAc (lipid intermediate II). The sequence is that of UDP-N-acetylglucosamine--N-acetylmuramyl-(pentapeptide) pyrophosphoryl-undecaprenol N-acetylglucosamine transferase from Shewanella frigidimarina (strain NCIMB 400).